Reading from the N-terminus, the 459-residue chain is NADH-ubiquinone oxidoreductase chain 4 (459 aa).

The next 13 membrane-spanning stretches (helical) occupy residues 22–42 (HLSY…LQWL), 61–81 (PIST…ILVS), 94–113 (RTFT…AFSA), 114–134 (LEMM…LIII), 146–166 (AGTY…IALT), 197–217 (WFAL…HLWL), 225–245 (PIAG…YGII), 258–278 (LSYP…LICL), 285–304 (SLIA…AALL), 308–330 (LSIT…LFCL), 352–372 (LLPL…ALPP), 380–400 (LTII…TGLG), and 437–457 (LIMM…QLMT).

The protein belongs to the complex I subunit 4 family.

The protein resides in the mitochondrion membrane. It catalyses the reaction a ubiquinone + NADH + 5 H(+)(in) = a ubiquinol + NAD(+) + 4 H(+)(out). Functionally, core subunit of the mitochondrial membrane respiratory chain NADH dehydrogenase (Complex I) that is believed to belong to the minimal assembly required for catalysis. Complex I functions in the transfer of electrons from NADH to the respiratory chain. The immediate electron acceptor for the enzyme is believed to be ubiquinone. The chain is NADH-ubiquinone oxidoreductase chain 4 (MT-ND4) from Pelomedusa subrufa (African side-necked turtle).